A 354-amino-acid polypeptide reads, in one-letter code: Uroporphyrinogen decarboxylase (354 aa).

Substrate contacts are provided by residues 27-31, Asp-77, Tyr-154, Thr-209, and His-327; that span reads RQAGR.

This sequence belongs to the uroporphyrinogen decarboxylase family. Homodimer.

It is found in the cytoplasm. It catalyses the reaction uroporphyrinogen III + 4 H(+) = coproporphyrinogen III + 4 CO2. It functions in the pathway porphyrin-containing compound metabolism; protoporphyrin-IX biosynthesis; coproporphyrinogen-III from 5-aminolevulinate: step 4/4. In terms of biological role, catalyzes the decarboxylation of four acetate groups of uroporphyrinogen-III to yield coproporphyrinogen-III. This chain is Uroporphyrinogen decarboxylase, found in Pseudomonas entomophila (strain L48).